Consider the following 572-residue polypeptide: Arginine--tRNA ligase (572 aa).

The short motif at 121 to 131 (PNLAKEMHVGH) is the 'HIGH' region element.

This sequence belongs to the class-I aminoacyl-tRNA synthetase family. As to quaternary structure, monomer.

The protein localises to the cytoplasm. The enzyme catalyses tRNA(Arg) + L-arginine + ATP = L-arginyl-tRNA(Arg) + AMP + diphosphate. In Chromobacterium violaceum (strain ATCC 12472 / DSM 30191 / JCM 1249 / CCUG 213 / NBRC 12614 / NCIMB 9131 / NCTC 9757 / MK), this protein is Arginine--tRNA ligase.